A 507-amino-acid chain; its full sequence is ATP synthase subunit alpha, chloroplastic (507 aa).

Residue 170 to 177 (GDRQTGKT) coordinates ATP. Thr257 is subject to Phosphothreonine.

This sequence belongs to the ATPase alpha/beta chains family. In terms of assembly, F-type ATPases have 2 components, CF(1) - the catalytic core - and CF(0) - the membrane proton channel. CF(1) has five subunits: alpha(3), beta(3), gamma(1), delta(1), epsilon(1). CF(0) has four main subunits: a, b, b' and c.

The protein localises to the plastid. Its subcellular location is the chloroplast thylakoid membrane. It catalyses the reaction ATP + H2O + 4 H(+)(in) = ADP + phosphate + 5 H(+)(out). Its function is as follows. Produces ATP from ADP in the presence of a proton gradient across the membrane. The alpha chain is a regulatory subunit. This Arabis hirsuta (Hairy rock-cress) protein is ATP synthase subunit alpha, chloroplastic.